Reading from the N-terminus, the 1426-residue chain is Phospholipid-transporting ATPase VD (1426 aa).

Residues 1-97 are Cytoplasmic-facing; it reads MTEALQWARY…PRNLFEQFHR (97 aa). The helical transmembrane segment at 98–118 threads the bilayer; it reads AANLYFLFLVVLNWVPLVEAF. Over 119–121 the chain is Exoplasmic loop; sequence QKE. A helical membrane pass occupies residues 122 to 142; the sequence is ITMLPLVVVLTIIAIKDGLED. The Cytoplasmic segment spans residues 143–321; the sequence is YRKYKIDKQI…SKLERRANTD (179 aa). The helical transmembrane segment at 322-342 threads the bilayer; it reads VLWCVMLLVIMCLTGAVGHGI. The Exoplasmic loop segment spans residues 343 to 365; sequence WLSRYEKMHFFNVPEPDGHIISP. A helical transmembrane segment spans residues 366 to 386; it reads LLAGFYMFWTMIILLQVLIPI. The Cytoplasmic segment spans residues 387–1113; sequence SLYVSIEIVK…HWCYTRLSNM (727 aa). Catalysis depends on aspartate 438, which acts as the 4-aspartylphosphate intermediate. ATP is bound by residues aspartate 438, lysine 439, and threonine 440. Aspartate 438 serves as a coordination point for Mg(2+). Threonine 440 provides a ligand contact to Mg(2+). The segment at 506 to 531 is disordered; sequence NGPLGNKPSNHLAGSSFTLGSGEGAS. The span at 512–524 shows a compositional bias: polar residues; sequence KPSNHLAGSSFTL. ATP is bound by residues glutamate 730, phenylalanine 772, lysine 796, arginine 840, threonine 920, glycine 921, aspartate 922, 996–1003, arginine 1030, and lysine 1036; that span reads GLIITGKT. Residue aspartate 1056 coordinates Mg(2+). 2 residues coordinate ATP: asparagine 1059 and aspartate 1060. Aspartate 1060 is a binding site for Mg(2+). The chain crosses the membrane as a helical span at residues 1114–1134; that stretch reads ILYFFYKNVAYVNLLFWYQFF. At 1135–1145 the chain is on the exoplasmic loop side; the sequence is CGFSGTSMTDY. Residues 1146–1166 traverse the membrane as a helical segment; the sequence is WVLIFFNLLFTSAPPVIYGVL. Residues 1167-1195 lie on the Cytoplasmic side of the membrane; sequence EKDVSAETLMQLPELYRSGQKSEAYLPHT. A helical transmembrane segment spans residues 1196 to 1216; sequence FWITLLDAFYQSLVCFFVPYF. The Exoplasmic loop segment spans residues 1217–1224; the sequence is TYQGSDTD. A helical transmembrane segment spans residues 1225-1245; sequence IFAFGNPLNTAALFIVLLHLV. The Cytoplasmic segment spans residues 1246 to 1252; sequence IESKSLT. Residues 1253-1273 traverse the membrane as a helical segment; that stretch reads WIHLLVIIGSILSYFLFAIVF. Residues 1274–1292 are Exoplasmic loop-facing; that stretch reads GAMCVTCNPPSNPYWIMQE. A helical transmembrane segment spans residues 1293-1313; that stretch reads HMLDPVFYLVCILTTSIALLP. At 1314–1426 the chain is on the cytoplasmic side; it reads RFVYRVLQGS…MAGPSKGKES (113 aa). ATP is bound at residue 1364-1371; the sequence is ANQSAGKS.

It belongs to the cation transport ATPase (P-type) (TC 3.A.3) family. Type IV subfamily. Component of a P4-ATPase flippase complex which consists of a catalytic alpha subunit ATP10A and an accessory beta subunit TMEM30A. The cofactor is Mg(2+). In terms of processing, autophosphorylated at the conserved aspartate of the P-type ATPase signature sequence. In terms of tissue distribution, expressed in placenta and, to a lesser extent, in kidney.

The protein localises to the cell membrane. Its subcellular location is the endoplasmic reticulum membrane. It catalyses the reaction ATP + H2O + phospholipidSide 1 = ADP + phosphate + phospholipidSide 2.. It carries out the reaction a beta-D-glucosyl-(1&lt;-&gt;1')-N-acylsphing-4-enine(out) + ATP + H2O = a beta-D-glucosyl-(1&lt;-&gt;1')-N-acylsphing-4-enine(in) + ADP + phosphate + H(+). Catalytic component of a P4-ATPase flippase complex, which catalyzes the hydrolysis of ATP coupled to the transport of glucosylceramide (GlcCer) from the outer to the inner leaflet of the plasma membrane. In Homo sapiens (Human), this protein is Phospholipid-transporting ATPase VD.